The primary structure comprises 188 residues: CXXC-type zinc finger protein 4 (188 aa).

The interval 1–20 (MHRNDSQRLGKPGGAPESLQ) is disordered. A CXXC-type zinc finger spans residues 122-163 (AKKKRKRCGVCVPCKRLINCGVCSSCRNRKTGHQICKFRKCE). Residues Cys-129, Cys-132, Cys-135, Cys-141, Cys-144, Cys-147, Cys-157, and Cys-162 each contribute to the Zn(2+) site.

It localises to the cytoplasm. In terms of biological role, acts as a negative regulator of the Wnt signaling pathway required for anterior neural structure formation. Binds preferentially to DNA containing cytidine-phosphate-guanosine (CpG) dinucleotides over CpH (H=A, T, and C), hemimethylated-CpG and hemimethylated-hydroxymethyl-CpG. This Xenopus tropicalis (Western clawed frog) protein is CXXC-type zinc finger protein 4 (cxxc4).